A 1058-amino-acid polypeptide reads, in one-letter code: UPF0507 protein YALI0E18612g (1058 aa).

In terms of domain architecture, VPS9 spans 252–394; sequence TNEDGPLDQA…IGENREQLEA (143 aa).

Belongs to the UPF0507 family.

This chain is UPF0507 protein YALI0E18612g, found in Yarrowia lipolytica (strain CLIB 122 / E 150) (Yeast).